The primary structure comprises 272 residues: 3-methyl-2-oxobutanoate hydroxymethyltransferase (272 aa).

Residues Asp42 and Asp86 each coordinate Mg(2+). Residues 42–43 (DS), Asp86, and Lys116 contribute to the 3-methyl-2-oxobutanoate site. Residue Glu118 coordinates Mg(2+). Glu185 acts as the Proton acceptor in catalysis.

The protein belongs to the PanB family. In terms of assembly, homodecamer; pentamer of dimers. Mg(2+) serves as cofactor.

It is found in the cytoplasm. The enzyme catalyses 3-methyl-2-oxobutanoate + (6R)-5,10-methylene-5,6,7,8-tetrahydrofolate + H2O = 2-dehydropantoate + (6S)-5,6,7,8-tetrahydrofolate. The protein operates within cofactor biosynthesis; (R)-pantothenate biosynthesis; (R)-pantoate from 3-methyl-2-oxobutanoate: step 1/2. In terms of biological role, catalyzes the reversible reaction in which hydroxymethyl group from 5,10-methylenetetrahydrofolate is transferred onto alpha-ketoisovalerate to form ketopantoate. The sequence is that of 3-methyl-2-oxobutanoate hydroxymethyltransferase from Prochlorococcus marinus (strain NATL1A).